The sequence spans 126 residues: Aspartate 1-decarboxylase (126 aa).

S25 serves as the catalytic Schiff-base intermediate with substrate; via pyruvic acid. At S25 the chain carries Pyruvic acid (Ser). T57 provides a ligand contact to substrate. The Proton donor role is filled by Y58. 73–75 contributes to the substrate binding site; sequence GSA.

This sequence belongs to the PanD family. As to quaternary structure, heterooctamer of four alpha and four beta subunits. The cofactor is pyruvate. In terms of processing, is synthesized initially as an inactive proenzyme, which is activated by self-cleavage at a specific serine bond to produce a beta-subunit with a hydroxyl group at its C-terminus and an alpha-subunit with a pyruvoyl group at its N-terminus.

It localises to the cytoplasm. It carries out the reaction L-aspartate + H(+) = beta-alanine + CO2. It participates in cofactor biosynthesis; (R)-pantothenate biosynthesis; beta-alanine from L-aspartate: step 1/1. Catalyzes the pyruvoyl-dependent decarboxylation of aspartate to produce beta-alanine. The protein is Aspartate 1-decarboxylase of Chromobacterium violaceum (strain ATCC 12472 / DSM 30191 / JCM 1249 / CCUG 213 / NBRC 12614 / NCIMB 9131 / NCTC 9757 / MK).